A 248-amino-acid polypeptide reads, in one-letter code: Small ribosomal subunit protein uS2 (248 aa).

Belongs to the universal ribosomal protein uS2 family.

The protein is Small ribosomal subunit protein uS2 of Alkalilimnicola ehrlichii (strain ATCC BAA-1101 / DSM 17681 / MLHE-1).